The primary structure comprises 139 residues: uncharacterized protein (139 aa).

The region spanning M1 to H62 is the HTH asnC-type domain. Residues M20 to R39 constitute a DNA-binding region (H-T-H motif).

This is an uncharacterized protein from Bacillus subtilis (strain 168).